We begin with the raw amino-acid sequence, 570 residues long: Low-affinity glucose transporter HXT1 (570 aa).

A compositionally biased stretch (polar residues) spans 1 to 20 (MNSTPDLISPQKSNSSNSYE). A disordered region spans residues 1 to 51 (MNSTPDLISPQKSNSSNSYELESGRSKAMNTPEGKNESFHDNLSESQVQPA). The Cytoplasmic segment spans residues 1 to 60 (MNSTPDLISPQKSNSSNSYELESGRSKAMNTPEGKNESFHDNLSESQVQPAVAPPNTGKG). Residues S23, S38, and S44 each carry the phosphoserine modification. Basic and acidic residues predominate over residues 34 to 43 (GKNESFHDNL). Residues 61–81 (VYVTVSICCVMVAFGGFIFGW) traverse the membrane as a helical segment. At 82-116 (DTGTISGFVAQTDFLRRFGMKHHDGSHYLSKVRTG) the chain is on the extracellular side. The helical transmembrane segment at 117–137 (LIVSIFNIGCAIGGIVLAKLG) threads the bilayer. Residues 138-143 (DMYGRR) are Cytoplasmic-facing. The helical transmembrane segment at 144–164 (IGLIVVVVIYTIGIIIQIASI) threads the bilayer. The Extracellular portion of the chain corresponds to 165 to 174 (NKWYQYFIGR). A helical membrane pass occupies residues 175-195 (IISGLGVGGITVLSPMLISEV). Residues 196–201 (APSEMR) are Cytoplasmic-facing. A helical membrane pass occupies residues 202–222 (GTLVSCYQVMITLGIFLGYCT). The Extracellular portion of the chain corresponds to 223–236 (NFGTKNYSNSVQWR). Residue N228 is glycosylated (N-linked (GlcNAc...) asparagine). A helical transmembrane segment spans residues 237–257 (VPLGLCFAWALFMIGGMMFVP). The Cytoplasmic portion of the chain corresponds to 258-340 (ESPRYLVEAG…IQSLQQLTGD (83 aa)). Residues 341-357 (NYFFYYGTIVFQAVGLS) traverse the membrane as a helical segment. The Extracellular portion of the chain corresponds to 358 to 363 (DSFETS). Residues 364–381 (IVFGVVNFFSTCCSLYTV) form a helical membrane-spanning segment. Residues 382–388 (DRFGRRN) lie on the Cytoplasmic side of the membrane. A helical transmembrane segment spans residues 389–409 (CLMWGAVGMVCCYVVYASVGV). At 410 to 431 (TRLWPNGQDQPSSKGAGNCMIV) the chain is on the extracellular side. A helical membrane pass occupies residues 432 to 452 (FACFYIFCFATTWAPIAYVVI). Over 453–469 (SECFPLRVKSKCMSIAS) the chain is Cytoplasmic. Residues 470–490 (AANWIWGFLISFFTPFITGAI) form a helical membrane-spanning segment. Residue N491 is a topological domain, extracellular. The chain crosses the membrane as a helical span at residues 492–512 (FYYGYVFMGCMVFAYFYVFFF). The Cytoplasmic segment spans residues 513-570 (VPETKGLSLEEVNDMYAEGVLPWKSASWVPVSKRGADYNADDLMHDDQPFYKSLFSRK).

The protein belongs to the major facilitator superfamily. Sugar transporter (TC 2.A.1.1) family.

Its subcellular location is the membrane. Functionally, low-affinity glucose transporter. HXT1 is as well involved in the transport of mannose. In Saccharomyces cerevisiae (strain ATCC 204508 / S288c) (Baker's yeast), this protein is Low-affinity glucose transporter HXT1 (HXT1).